A 345-amino-acid chain; its full sequence is GTPase Obg (345 aa).

Residues Met-1–Ile-159 form the Obg domain. Residues Ala-160 to Asp-327 enclose the OBG-type G domain. GTP-binding positions include Gly-166–Ser-173, Phe-191–His-195, Asp-212–Gly-215, Ser-279–Asp-282, and Ser-308–Gln-310. Mg(2+) contacts are provided by Ser-173 and Thr-193.

It belongs to the TRAFAC class OBG-HflX-like GTPase superfamily. OBG GTPase family. Monomer. The cofactor is Mg(2+).

Its subcellular location is the cytoplasm. Functionally, an essential GTPase which binds GTP, GDP and possibly (p)ppGpp with moderate affinity, with high nucleotide exchange rates and a fairly low GTP hydrolysis rate. Plays a role in control of the cell cycle, stress response, ribosome biogenesis and in those bacteria that undergo differentiation, in morphogenesis control. The protein is GTPase Obg of Azorhizobium caulinodans (strain ATCC 43989 / DSM 5975 / JCM 20966 / LMG 6465 / NBRC 14845 / NCIMB 13405 / ORS 571).